The primary structure comprises 437 residues: tRNA-2-methylthio-N(6)-dimethylallyladenosine synthase (437 aa).

The MTTase N-terminal domain occupies 1 to 115 (MKVYIETMGC…ISQVIHKEKA (115 aa)). 6 residues coordinate [4Fe-4S] cluster: cysteine 10, cysteine 46, cysteine 78, cysteine 148, cysteine 152, and cysteine 155. One can recognise a Radical SAM core domain in the interval 134 to 367 (KKAQIRSLLN…QNRHKEILEE (234 aa)). Residues 370-436 (KLEVGKTHVV…KGRLMAATKG (67 aa)) form the TRAM domain.

The protein belongs to the methylthiotransferase family. MiaB subfamily. As to quaternary structure, monomer. It depends on [4Fe-4S] cluster as a cofactor.

Its subcellular location is the cytoplasm. It catalyses the reaction N(6)-dimethylallyladenosine(37) in tRNA + (sulfur carrier)-SH + AH2 + 2 S-adenosyl-L-methionine = 2-methylsulfanyl-N(6)-dimethylallyladenosine(37) in tRNA + (sulfur carrier)-H + 5'-deoxyadenosine + L-methionine + A + S-adenosyl-L-homocysteine + 2 H(+). Functionally, catalyzes the methylthiolation of N6-(dimethylallyl)adenosine (i(6)A), leading to the formation of 2-methylthio-N6-(dimethylallyl)adenosine (ms(2)i(6)A) at position 37 in tRNAs that read codons beginning with uridine. The polypeptide is tRNA-2-methylthio-N(6)-dimethylallyladenosine synthase (Helicobacter pylori (strain ATCC 700392 / 26695) (Campylobacter pylori)).